We begin with the raw amino-acid sequence, 286 residues long: MASGKEIKGKIGSIKNTQKITSAMEMVAASKMKKAQDRMTASRPYAENIRNVIGHLANANLEYRHPYLEDREVKRVGYIVISTDRGLCGGLNTNEFKKVTKDAKKWQEQGVEVDFAALGSKSCAFFNRFGGNMLAAESGLGDAPSVKDVIGLVRIMLNAFNEGKIDRLYLVFNKFVNTMAQEPLIDQLLPLPKSEDKALKHRWDYIYEPDPKPILDTLLVRYIESQVYQGVVENAASEQAARMVAMKAATDNAGDLIDDLQLIYNKARQAAITQEISEIVSGAAAV.

This sequence belongs to the ATPase gamma chain family. As to quaternary structure, F-type ATPases have 2 components, CF(1) - the catalytic core - and CF(0) - the membrane proton channel. CF(1) has five subunits: alpha(3), beta(3), gamma(1), delta(1), epsilon(1). CF(0) has three main subunits: a, b and c.

The protein localises to the cell inner membrane. Its function is as follows. Produces ATP from ADP in the presence of a proton gradient across the membrane. The gamma chain is believed to be important in regulating ATPase activity and the flow of protons through the CF(0) complex. The polypeptide is ATP synthase gamma chain (Pseudoalteromonas atlantica (strain T6c / ATCC BAA-1087)).